Consider the following 321-residue polypeptide: Lambda-crystallin homolog (321 aa).

Phosphoserine is present on Ser-6. NAD(+)-binding positions include 19 to 20 (LI), Asp-39, Glu-100, and Lys-105.

It belongs to the 3-hydroxyacyl-CoA dehydrogenase family. As to quaternary structure, homodimer.

Its subcellular location is the cytoplasm. The enzyme catalyses L-gulonate + NAD(+) = 3-dehydro-L-gulonate + NADH + H(+). With respect to regulation, inhibited by malonate. Functionally, has high L-gulonate 3-dehydrogenase activity. It also exhibits low dehydrogenase activity toward L-3-hydroxybutyrate (HBA) and L-threonate. This is Lambda-crystallin homolog (CRYL1) from Bos taurus (Bovine).